Consider the following 139-residue polypeptide: Transcriptional regulator WhiB5 (139 aa).

A 4Fe-4S Wbl-type domain is found at 4 to 77; sequence PCATDPELWF…AGIKLPGGQY (74 aa). [4Fe-4S] cluster is bound by residues Cys5, Cys41, Cys45, and Cys53.

Belongs to the WhiB family. Requires [4Fe-4S] cluster as cofactor. In terms of processing, the Fe-S cluster can be nitrosylated by nitric oxide (NO). Post-translationally, upon Fe-S cluster removal intramolecular disulfide bonds are formed.

The protein localises to the cytoplasm. A transcription factor that is probably redox-responsive. Probably plays a role in immunomodulation and reactivation after chronic infection. Its induction results in transcription of a number of genes including sigM, and the genes for 2 type VII secretion systems ESX-2 and ESX-4. Seems to negatively regulate its own expression. The apo-form has been shown to act as a protein disulfide reductase. The apo- but not holo-form probably binds DNA. In Mycobacterium tuberculosis (strain ATCC 25618 / H37Rv), this protein is Transcriptional regulator WhiB5 (whiB5).